The primary structure comprises 404 residues: uncharacterized protein (404 aa).

2 helical membrane passes run 35–55 and 92–112; these read ILFSNIKSILAIIWKYSFTFL and EDIWASTIILGVIIGYLISSI.

The protein resides in the membrane. This is an uncharacterized protein from Saccharomyces cerevisiae (strain ATCC 204508 / S288c) (Baker's yeast).